A 173-amino-acid polypeptide reads, in one-letter code: 3-hydroxydecanoyl-[acyl-carrier-protein] dehydratase (173 aa).

The active site involves His-71.

The protein belongs to the thioester dehydratase family. FabA subfamily. As to quaternary structure, homodimer.

It localises to the cytoplasm. It carries out the reaction a (3R)-hydroxyacyl-[ACP] = a (2E)-enoyl-[ACP] + H2O. The enzyme catalyses (3R)-hydroxydecanoyl-[ACP] = (2E)-decenoyl-[ACP] + H2O. The catalysed reaction is (2E)-decenoyl-[ACP] = (3Z)-decenoyl-[ACP]. Its pathway is lipid metabolism; fatty acid biosynthesis. In terms of biological role, necessary for the introduction of cis unsaturation into fatty acids. Catalyzes the dehydration of (3R)-3-hydroxydecanoyl-ACP to E-(2)-decenoyl-ACP and then its isomerization to Z-(3)-decenoyl-ACP. Can catalyze the dehydratase reaction for beta-hydroxyacyl-ACPs with saturated chain lengths up to 16:0, being most active on intermediate chain length. This is 3-hydroxydecanoyl-[acyl-carrier-protein] dehydratase from Bradyrhizobium sp. (strain ORS 278).